The sequence spans 490 residues: Bifunctional protein HldE (490 aa).

A ribokinase region spans residues 1-330 (MNNFDTLLQS…RKILPHASLA (330 aa)). 205–208 (NRKE) contacts ATP. Asp-275 is a catalytic residue. The tract at residues 358–490 (FTNGCFDILH…LVEKAREGTS (133 aa)) is cytidylyltransferase.

This sequence in the N-terminal section; belongs to the carbohydrate kinase PfkB family. It in the C-terminal section; belongs to the cytidylyltransferase family. Homodimer.

The catalysed reaction is D-glycero-beta-D-manno-heptose 7-phosphate + ATP = D-glycero-beta-D-manno-heptose 1,7-bisphosphate + ADP + H(+). It carries out the reaction D-glycero-beta-D-manno-heptose 1-phosphate + ATP + H(+) = ADP-D-glycero-beta-D-manno-heptose + diphosphate. It functions in the pathway nucleotide-sugar biosynthesis; ADP-L-glycero-beta-D-manno-heptose biosynthesis; ADP-L-glycero-beta-D-manno-heptose from D-glycero-beta-D-manno-heptose 7-phosphate: step 1/4. Its pathway is nucleotide-sugar biosynthesis; ADP-L-glycero-beta-D-manno-heptose biosynthesis; ADP-L-glycero-beta-D-manno-heptose from D-glycero-beta-D-manno-heptose 7-phosphate: step 3/4. In terms of biological role, catalyzes the phosphorylation of D-glycero-D-manno-heptose 7-phosphate at the C-1 position to selectively form D-glycero-beta-D-manno-heptose-1,7-bisphosphate. Functionally, catalyzes the ADP transfer from ATP to D-glycero-beta-D-manno-heptose 1-phosphate, yielding ADP-D-glycero-beta-D-manno-heptose. The chain is Bifunctional protein HldE from Rhodopseudomonas palustris (strain HaA2).